The sequence spans 493 residues: MKSRLTALPDWDPALLQQLGLPIKRVEADSRRVLPGDVFLACRGEYADGRDFIPAALEKGAAAVLWDEADGFAWKAEWQAPNLAVPNLRERAGIVAAHVLGLPSRDLTVVGITGTNGKTSISHWLAQAFSLLGQKAALIGTVGNGFYGHLTETTHTTPDPVTVQQKLAEYRRQGAHVVTMEVSSHGLDQFRVNGVEFATAVFTNLTRDHLDYHGSMEAYGESKKKLFFWEGLKHAVINADDAFGRQLAAGIDPKQTRVVTYGLEQGDVRPLALAATLEGLQLTVATPWGTVDVRTGLVGRFNAANLLACLATLCVNGVSLQDAAAVMARIQPARGRMQSVGGAHEPLVVIDYAHTPDALEKALATLSEIRPAGGRLFCVFGCGGDRDPGKRPMMGAIAEKHADVAVLTSDNPRSEDPQAIIRDVLAGMDAARAHVEADREAAIHWAVAQARVGDVVLVAGKGHEEYQDIAGVKRPFSDFRVAEEALTAWGKRP.

Ser-30 is a UDP-N-acetyl-alpha-D-muramoyl-L-alanyl-D-glutamate binding site. Gly-114–Ser-120 is a binding site for ATP. Residues Thr-156 to Thr-157, Ser-183, Gln-189, and Arg-191 each bind UDP-N-acetyl-alpha-D-muramoyl-L-alanyl-D-glutamate. Lys-223 bears the N6-carboxylysine mark. Residues Arg-386, Asp-410–Arg-413, Gly-460, and Glu-464 each bind meso-2,6-diaminopimelate. The Meso-diaminopimelate recognition motif signature appears at Asp-410–Arg-413.

The protein belongs to the MurCDEF family. MurE subfamily. Requires Mg(2+) as cofactor. In terms of processing, carboxylation is probably crucial for Mg(2+) binding and, consequently, for the gamma-phosphate positioning of ATP.

It is found in the cytoplasm. It catalyses the reaction UDP-N-acetyl-alpha-D-muramoyl-L-alanyl-D-glutamate + meso-2,6-diaminopimelate + ATP = UDP-N-acetyl-alpha-D-muramoyl-L-alanyl-gamma-D-glutamyl-meso-2,6-diaminopimelate + ADP + phosphate + H(+). It participates in cell wall biogenesis; peptidoglycan biosynthesis. Functionally, catalyzes the addition of meso-diaminopimelic acid to the nucleotide precursor UDP-N-acetylmuramoyl-L-alanyl-D-glutamate (UMAG) in the biosynthesis of bacterial cell-wall peptidoglycan. This Chromobacterium violaceum (strain ATCC 12472 / DSM 30191 / JCM 1249 / CCUG 213 / NBRC 12614 / NCIMB 9131 / NCTC 9757 / MK) protein is UDP-N-acetylmuramoyl-L-alanyl-D-glutamate--2,6-diaminopimelate ligase.